The primary structure comprises 97 residues: Putative membrane protein insertion efficiency factor (97 aa).

A disordered region spans residues 72–97 (VPGAEPDQEQHQCTPLCNHHSEDHSQ).

It belongs to the UPF0161 family.

It is found in the cell inner membrane. Its function is as follows. Could be involved in insertion of integral membrane proteins into the membrane. The protein is Putative membrane protein insertion efficiency factor of Alcanivorax borkumensis (strain ATCC 700651 / DSM 11573 / NCIMB 13689 / SK2).